Consider the following 64-residue polypeptide: Large ribosomal subunit protein bL35 (64 aa).

Basic residues-rich tracts occupy residues 1-26 (MPKM…KRSK) and 33-44 (LTKKSPKRKRKL). A disordered region spans residues 1–44 (MPKMKTHRGAAKRFKKTGTGKIKRSKAYTSHILTKKSPKRKRKL).

Belongs to the bacterial ribosomal protein bL35 family.

The sequence is that of Large ribosomal subunit protein bL35 from Alkaliphilus oremlandii (strain OhILAs) (Clostridium oremlandii (strain OhILAs)).